The sequence spans 86 residues: U-actitoxin-Avd10a (86 aa).

A signal peptide spans 1 to 20; that stretch reads MSRIAILLFVAFLLVAGISA. Positions 21–42 are excised as a propeptide; sequence KSTAHFKKNVLADLFKERRFNA. A ShKT domain is found at 51-86; the sequence is CVNIDVDSFCDGMAERGACNIIPQMATNCAKACNSC. Cystine bridges form between cysteine 51–cysteine 86, cysteine 60–cysteine 79, and cysteine 69–cysteine 83.

It belongs to the sea anemone type 1 potassium channel toxin family. Type 1b subfamily.

It is found in the secreted. Its subcellular location is the nematocyst. Inhibits voltage-gated potassium channels (Kv1/KCNA). The chain is U-actitoxin-Avd10a from Anemonia viridis (Snakelocks anemone).